Here is a 200-residue protein sequence, read N- to C-terminus: Cytochrome c biogenesis ATP-binding export protein CcmA (200 aa).

One can recognise an ABC transporter domain in the interval 1 to 199 (MRLTGRGLRC…AARELRIGGA (199 aa)). Position 35 to 42 (35 to 42 (GANGAGKT)) interacts with ATP.

Belongs to the ABC transporter superfamily. CcmA exporter (TC 3.A.1.107) family. As to quaternary structure, the complex is composed of two ATP-binding proteins (CcmA) and two transmembrane proteins (CcmB).

Its subcellular location is the cell inner membrane. It catalyses the reaction heme b(in) + ATP + H2O = heme b(out) + ADP + phosphate + H(+). Its function is as follows. Part of the ABC transporter complex CcmAB involved in the biogenesis of c-type cytochromes; once thought to export heme, this seems not to be the case, but its exact role is uncertain. Responsible for energy coupling to the transport system. The chain is Cytochrome c biogenesis ATP-binding export protein CcmA from Rhodopseudomonas palustris (strain BisB18).